A 251-amino-acid polypeptide reads, in one-letter code: tRNA1(Val) (adenine(37)-N6)-methyltransferase (251 aa).

It belongs to the methyltransferase superfamily. tRNA (adenine-N(6)-)-methyltransferase family.

The protein resides in the cytoplasm. It carries out the reaction adenosine(37) in tRNA1(Val) + S-adenosyl-L-methionine = N(6)-methyladenosine(37) in tRNA1(Val) + S-adenosyl-L-homocysteine + H(+). In terms of biological role, specifically methylates the adenine in position 37 of tRNA(1)(Val) (anticodon cmo5UAC). The protein is tRNA1(Val) (adenine(37)-N6)-methyltransferase of Yersinia enterocolitica serotype O:8 / biotype 1B (strain NCTC 13174 / 8081).